Here is a 213-residue protein sequence, read N- to C-terminus: Protein Flattop (213 aa).

The disordered stretch occupies residues valine 127–lysine 213. Residues glutamine 151 to lysine 213 show a composition bias toward polar residues.

Belongs to the Flattop family.

The protein localises to the cytoplasm. Its subcellular location is the cytoskeleton. The protein resides in the cilium basal body. It is found in the cell projection. It localises to the cilium. The protein localises to the apical cell membrane. Its subcellular location is the cilium axoneme. Functionally, microtubule inner protein (MIP) part of the dynein-decorated doublet microtubules (DMTs) in cilia axoneme. Acts as a regulator of cilium basal body docking and positioning in mono- and multiciliated cells. Regulates basal body docking and cilia formation in multiciliated lung cells. Regulates kinocilium positioning and stereocilia bundle morphogenesis in the inner ear. In Danio rerio (Zebrafish), this protein is Protein Flattop.